Consider the following 352-residue polypeptide: tRNA(Ile)-lysidine synthase (352 aa).

58-63 (SGGADS) lines the ATP pocket.

This sequence belongs to the tRNA(Ile)-lysidine synthase family.

It is found in the cytoplasm. It carries out the reaction cytidine(34) in tRNA(Ile2) + L-lysine + ATP = lysidine(34) in tRNA(Ile2) + AMP + diphosphate + H(+). Ligates lysine onto the cytidine present at position 34 of the AUA codon-specific tRNA(Ile) that contains the anticodon CAU, in an ATP-dependent manner. Cytidine is converted to lysidine, thus changing the amino acid specificity of the tRNA from methionine to isoleucine. This is tRNA(Ile)-lysidine synthase from Streptomyces coelicolor (strain ATCC BAA-471 / A3(2) / M145).